The sequence spans 216 residues: Probable GTP-binding protein EngB (216 aa).

Residues 24-205 enclose the EngB-type G domain; sequence QTPELAFVGR…WARIASAATD (182 aa). Residues 32-39, 59-63, 86-89, 153-156, and 184-186 contribute to the GTP site; these read GRSNVGKS, GRTRA, DLPG, TKMD, and FSA. Ser39 and Thr61 together coordinate Mg(2+).

The protein belongs to the TRAFAC class TrmE-Era-EngA-EngB-Septin-like GTPase superfamily. EngB GTPase family. The cofactor is Mg(2+).

Functionally, necessary for normal cell division and for the maintenance of normal septation. The polypeptide is Probable GTP-binding protein EngB (Anaeromyxobacter sp. (strain Fw109-5)).